The sequence spans 220 residues: Adenylate kinase (220 aa).

10–15 (GAGKGT) contacts ATP. An NMP region spans residues 30 to 59 (STGDMLRAAVKAGSPLGVEAKGYMDAGKLV). Residues threonine 31, arginine 36, 57–59 (KLV), 85–88 (GFPR), and glutamine 92 contribute to the AMP site. The LID stretch occupies residues 122–159 (GRRTHPASGRTYHVKFNPPKVEGKDDVTGEPLIQRDDD). ATP-binding positions include arginine 123 and 132-133 (TY). AMP is bound by residues arginine 156 and arginine 167. Position 206 (glycine 206) interacts with ATP.

This sequence belongs to the adenylate kinase family. In terms of assembly, monomer.

The protein resides in the cytoplasm. The catalysed reaction is AMP + ATP = 2 ADP. It participates in purine metabolism; AMP biosynthesis via salvage pathway; AMP from ADP: step 1/1. Catalyzes the reversible transfer of the terminal phosphate group between ATP and AMP. Plays an important role in cellular energy homeostasis and in adenine nucleotide metabolism. The sequence is that of Adenylate kinase from Burkholderia ambifaria (strain ATCC BAA-244 / DSM 16087 / CCUG 44356 / LMG 19182 / AMMD) (Burkholderia cepacia (strain AMMD)).